Reading from the N-terminus, the 200-residue chain is Transcription elongation factor A protein-like 6 (200 aa).

Residues 1–200 (MEKPYNKNEG…QRGLHDIPYL (200 aa)) form a disordered region. The span at 20–36 (DEVEPDDEGKSDEEEKP) shows a compositional bias: acidic residues. Residue Ser-30 is modified to Phosphoserine. 3 stretches are compositionally biased toward basic and acidic residues: residues 37–52 (DAEG…KAEG), 60–80 (LEDK…KPQG), and 115–154 (DRGT…EELR). Ser-65 carries the phosphoserine modification.

Belongs to the TFS-II family. TFA subfamily.

Its subcellular location is the nucleus. Its function is as follows. May be involved in transcriptional regulation. In Homo sapiens (Human), this protein is Transcription elongation factor A protein-like 6 (TCEAL6).